A 77-amino-acid polypeptide reads, in one-letter code: UPF0291 protein RBAM_017680 (77 aa).

The tract at residues 55–77 (IDPEGNDVTPEKLKREQQKNNLH) is disordered. Residues 63–77 (TPEKLKREQQKNNLH) show a composition bias toward basic and acidic residues.

This sequence belongs to the UPF0291 family.

The protein resides in the cytoplasm. This Bacillus velezensis (strain DSM 23117 / BGSC 10A6 / LMG 26770 / FZB42) (Bacillus amyloliquefaciens subsp. plantarum) protein is UPF0291 protein RBAM_017680.